The sequence spans 90 residues: Small ribosomal subunit protein bS16 (90 aa).

The protein belongs to the bacterial ribosomal protein bS16 family.

In Lactococcus lactis subsp. cremoris (strain SK11), this protein is Small ribosomal subunit protein bS16.